We begin with the raw amino-acid sequence, 128 residues long: Putative pre-16S rRNA nuclease (128 aa).

This sequence belongs to the YqgF nuclease family.

The protein resides in the cytoplasm. Could be a nuclease involved in processing of the 5'-end of pre-16S rRNA. This chain is Putative pre-16S rRNA nuclease, found in Campylobacter lari (strain RM2100 / D67 / ATCC BAA-1060).